Reading from the N-terminus, the 405-residue chain is MMSPQEQLERIKFGTADFINDEDMLKKLKRSIETKKPLNIKLGADPTRPDIHLGHTVVINKLKTFQDLGHKVSFLIGDFTAMIGDPSGKNSTRPMLTREEIEENGRSYAKQIFKILDPEKTEIVYNSSWIMKMTPAEFITMTSKYTVAQLLEREDFTKRYRSGTPIGIHEFIYPLTQGYDSVALKTDVELGGTDQKFNLLVGRAMQAAYGMEAQCVLTMPILEGIDGVNKMSKSLDNYISVVDTPKDMFGKTMRISDELMYRWYELLTDVGAAGLNQLRADVAEGRKHPRTVKVELAKFLIKRFHSQAEAQAAEDEFNRIFVEKGLPDEVPDFEVEAETQMGLAALMVKAQLAASNSEAGRLIQGGGVQIDGEKVSDPRLKIDLKSGASFVLKAGKKKFVKIVVK.

The 'HIGH' region motif lies at 46-55; that stretch reads PTRPDIHLGH. The 'KMSKS' region signature appears at 230-234; it reads KMSKS. An ATP-binding site is contributed by Lys-233. Residues 341–404 enclose the S4 RNA-binding domain; that stretch reads MGLAALMVKA…GKKKFVKIVV (64 aa).

The protein belongs to the class-I aminoacyl-tRNA synthetase family. TyrS type 2 subfamily. Homodimer.

The protein resides in the cytoplasm. The catalysed reaction is tRNA(Tyr) + L-tyrosine + ATP = L-tyrosyl-tRNA(Tyr) + AMP + diphosphate + H(+). In terms of biological role, catalyzes the attachment of tyrosine to tRNA(Tyr) in a two-step reaction: tyrosine is first activated by ATP to form Tyr-AMP and then transferred to the acceptor end of tRNA(Tyr). The protein is Tyrosine--tRNA ligase of Bdellovibrio bacteriovorus (strain ATCC 15356 / DSM 50701 / NCIMB 9529 / HD100).